A 1060-amino-acid chain; its full sequence is DNA topoisomerase 1 (1060 aa).

The region spanning 1-141 (MILVIAEKPN…KRMKFSALTK (141 aa)) is the Toprim domain. Positions 7 and 107 each coordinate Mg(2+). A Topo IA-type catalytic domain is found at 156–947 (NFGMANAGIA…EAKIRLTKIL (792 aa)). Residues 196–201 (STGRVQ) form an interaction with DNA region. The 110-residue stretch at 482-591 (LIGYLAGKGG…IKVYLQLLGI (110 aa)) folds into the DOD-type homing endonuclease domain. Y690 serves as the catalytic O-(5'-phospho-DNA)-tyrosine intermediate. The C4-type 1 zinc-finger motif lies at 978-1006 (CPKCGGDLIVKYNEKTGKRFVGCSNWPKC). The C4-type 2; atypical zinc-finger motif lies at 1025-1050 (CCNGAPVVIIREKDGREWEICLDMNC).

Belongs to the type IA topoisomerase family. Monomer. Mg(2+) is required as a cofactor. In terms of processing, this protein undergoes a protein self splicing that involves a post-translational excision of the intervening region (intein) followed by peptide ligation.

The catalysed reaction is ATP-independent breakage of single-stranded DNA, followed by passage and rejoining.. Releases the supercoiling and torsional tension of DNA, which is introduced during the DNA replication and transcription, by transiently cleaving and rejoining one strand of the DNA duplex. Introduces a single-strand break via transesterification at a target site in duplex DNA. The scissile phosphodiester is attacked by the catalytic tyrosine of the enzyme, resulting in the formation of a DNA-(5'-phosphotyrosyl)-enzyme intermediate and the expulsion of a 3'-OH DNA strand. The free DNA strand then undergoes passage around the unbroken strand, thus removing DNA supercoils. Finally, in the religation step, the DNA 3'-OH attacks the covalent intermediate to expel the active-site tyrosine and restore the DNA phosphodiester backbone. This Pyrococcus furiosus (strain ATCC 43587 / DSM 3638 / JCM 8422 / Vc1) protein is DNA topoisomerase 1 (topA).